The sequence spans 681 residues: Potassium-transporting ATPase ATP-binding subunit (681 aa).

A run of 4 helical transmembrane segments spans residues 30 to 50 (LLVY…FFGI), 59 to 79 (LAIA…EAIA), 216 to 236 (ILLV…LPFT), and 255 to 275 (IALL…SIGI). The active-site 4-aspartylphosphate intermediate is the aspartate 306. ATP is bound by residues aspartate 343, glutamate 347, 376–383 (FTATTRMS), and lysine 394. Aspartate 517 and aspartate 521 together coordinate Mg(2+). 3 helical membrane-spanning segments follow: residues 587 to 607 (FAII…LNLM), 615 to 635 (AILS…PLSL), and 661 to 681 (LIAP…LGIV).

The protein belongs to the cation transport ATPase (P-type) (TC 3.A.3) family. Type IA subfamily. In terms of assembly, the system is composed of three essential subunits: KdpA, KdpB and KdpC.

The protein resides in the cell membrane. The enzyme catalyses K(+)(out) + ATP + H2O = K(+)(in) + ADP + phosphate + H(+). Its function is as follows. Part of the high-affinity ATP-driven potassium transport (or Kdp) system, which catalyzes the hydrolysis of ATP coupled with the electrogenic transport of potassium into the cytoplasm. This subunit is responsible for energy coupling to the transport system and for the release of the potassium ions to the cytoplasm. This is Potassium-transporting ATPase ATP-binding subunit from Listeria monocytogenes serotype 4b (strain CLIP80459).